Here is a 219-residue protein sequence, read N- to C-terminus: Cytochrome b6 (219 aa).

The chain crosses the membrane as a helical span at residues 32–52 (IFYCFGGIVLTAFIFQGASGF). A heme c-binding site is contributed by Cys35. His86 and His100 together coordinate heme b. 3 helical membrane-spanning segments follow: residues 90-110 (SGCMVLVLILHISRVYLTGGF), 116-136 (LTWISGVILAVVTVSFGVTGY), and 190-210 (IHTFVLPLVTLVLLIVHFSLL). 2 residues coordinate heme b: His191 and His206.

Belongs to the cytochrome b family. PetB subfamily. The 4 large subunits of the cytochrome b6-f complex are cytochrome b6, subunit IV (17 kDa polypeptide, PetD), cytochrome f and the Rieske protein, while the 4 small subunits are PetG, PetL, PetM and PetN. The complex functions as a dimer. The cofactor is heme b. It depends on heme c as a cofactor.

Its subcellular location is the plastid. It is found in the chloroplast thylakoid membrane. Functionally, component of the cytochrome b6-f complex, which mediates electron transfer between photosystem II (PSII) and photosystem I (PSI), cyclic electron flow around PSI, and state transitions. This chain is Cytochrome b6, found in Heterocapsa triquetra (Dinoflagellate).